A 341-amino-acid polypeptide reads, in one-letter code: Methionine import ATP-binding protein MetN 2 (341 aa).

The ABC transporter domain occupies 2–241 (IKLNQIVKRY…PQHEVTKRFV (240 aa)). ATP is bound at residue 38–45 (GFSGAGKS).

It belongs to the ABC transporter superfamily. Methionine importer (TC 3.A.1.24) family. In terms of assembly, the complex is composed of two ATP-binding proteins (MetN), two transmembrane proteins (MetI) and a solute-binding protein (MetQ).

The protein localises to the cell membrane. The enzyme catalyses L-methionine(out) + ATP + H2O = L-methionine(in) + ADP + phosphate + H(+). It catalyses the reaction D-methionine(out) + ATP + H2O = D-methionine(in) + ADP + phosphate + H(+). Its function is as follows. Part of the ABC transporter complex MetNIQ involved in methionine import. Responsible for energy coupling to the transport system. In Staphylococcus epidermidis (strain ATCC 35984 / DSM 28319 / BCRC 17069 / CCUG 31568 / BM 3577 / RP62A), this protein is Methionine import ATP-binding protein MetN 2.